The chain runs to 438 residues: Probable phosphoglucosamine mutase (438 aa).

Catalysis depends on serine 91, which acts as the Phosphoserine intermediate. Serine 91, aspartate 228, aspartate 230, and aspartate 232 together coordinate Mg(2+). Position 91 is a phosphoserine (serine 91).

This sequence belongs to the phosphohexose mutase family. The cofactor is Mg(2+). Post-translationally, activated by phosphorylation.

It carries out the reaction alpha-D-glucosamine 1-phosphate = D-glucosamine 6-phosphate. Functionally, catalyzes the conversion of glucosamine-6-phosphate to glucosamine-1-phosphate. The sequence is that of Probable phosphoglucosamine mutase from Methanocella arvoryzae (strain DSM 22066 / NBRC 105507 / MRE50).